We begin with the raw amino-acid sequence, 398 residues long: Ubiquitin-like modifier-activating enzyme 5 (398 aa).

ATP-binding residues include glycine 76, aspartate 97, lysine 120, asparagine 143, and asparagine 177. Zn(2+) is bound by residues cysteine 219 and cysteine 222. Cysteine 243 functions as the Glycyl thioester intermediate in the catalytic mechanism. Zn(2+) contacts are provided by cysteine 296 and cysteine 301.

Belongs to the ubiquitin-activating E1 family. UBA5 subfamily.

In terms of biological role, E1-like enzyme which activates UFM1. This Drosophila grimshawi (Hawaiian fruit fly) protein is Ubiquitin-like modifier-activating enzyme 5.